Reading from the N-terminus, the 123-residue chain is Cysteine proteinase inhibitor 8 (123 aa).

A signal peptide spans 1 to 19; sequence MARIPLLLALLLAVSAAAA. One can recognise a Cystatin domain in the interval 33–91; it reads GGWSPITDVGDPHIQELGGWAVERHASLSSDGLRFRRVTSGEQQVVSGMNYRLVVSASD. The Secondary area of contact motif lies at 76-80; sequence QVVSG.

This sequence belongs to the cystatin family. Phytocystatin subfamily.

The protein resides in the secreted. In terms of biological role, specific inhibitor of cysteine proteinases. Probably involved in the regulation of endogenous processes and in defense against pests and pathogens. This Oryza sativa subsp. japonica (Rice) protein is Cysteine proteinase inhibitor 8.